A 355-amino-acid polypeptide reads, in one-letter code: uncharacterized protein (355 aa).

Belongs to the ycf89 family.

It localises to the plastid. The protein resides in the chloroplast. This is an uncharacterized protein from Trieres chinensis (Marine centric diatom).